Here is a 203-residue protein sequence, read N- to C-terminus: 22.3 kDa class VI heat shock protein (203 aa).

The sHSP domain occupies 86–203 (ALRRGARTTV…DAHQAAAATA (118 aa)).

This sequence belongs to the small heat shock protein (HSP20) family. As to quaternary structure, may form oligomeric structures.

The protein resides in the cytoplasm. The polypeptide is 22.3 kDa class VI heat shock protein (HSP22.3) (Oryza sativa subsp. japonica (Rice)).